Here is a 404-residue protein sequence, read N- to C-terminus: CCA-adding enzyme (404 aa).

Positions 32 and 35 each coordinate ATP. The CTP site is built by G32 and R35. The Mg(2+) site is built by D45 and D47. ATP contacts are provided by R116, D159, R162, R165, and R168. Positions 116, 159, 162, 165, and 168 each coordinate CTP.

The protein belongs to the tRNA nucleotidyltransferase/poly(A) polymerase family. Bacterial CCA-adding enzyme type 3 subfamily. As to quaternary structure, homodimer. It depends on Mg(2+) as a cofactor.

It carries out the reaction a tRNA precursor + 2 CTP + ATP = a tRNA with a 3' CCA end + 3 diphosphate. The catalysed reaction is a tRNA with a 3' CCA end + 2 CTP + ATP = a tRNA with a 3' CCACCA end + 3 diphosphate. Functionally, catalyzes the addition and repair of the essential 3'-terminal CCA sequence in tRNAs without using a nucleic acid template. Adds these three nucleotides in the order of C, C, and A to the tRNA nucleotide-73, using CTP and ATP as substrates and producing inorganic pyrophosphate. tRNA 3'-terminal CCA addition is required both for tRNA processing and repair. Also involved in tRNA surveillance by mediating tandem CCA addition to generate a CCACCA at the 3' terminus of unstable tRNAs. While stable tRNAs receive only 3'-terminal CCA, unstable tRNAs are marked with CCACCA and rapidly degraded. The chain is CCA-adding enzyme from Ligilactobacillus salivarius (strain UCC118) (Lactobacillus salivarius).